A 290-amino-acid polypeptide reads, in one-letter code: 33 kDa chaperonin (290 aa).

2 disulfides stabilise this stretch: Cys-231/Cys-233 and Cys-264/Cys-267.

The protein belongs to the HSP33 family. In terms of processing, under oxidizing conditions two disulfide bonds are formed involving the reactive cysteines. Under reducing conditions zinc is bound to the reactive cysteines and the protein is inactive.

Its subcellular location is the cytoplasm. In terms of biological role, redox regulated molecular chaperone. Protects both thermally unfolding and oxidatively damaged proteins from irreversible aggregation. Plays an important role in the bacterial defense system toward oxidative stress. This is 33 kDa chaperonin from Photorhabdus laumondii subsp. laumondii (strain DSM 15139 / CIP 105565 / TT01) (Photorhabdus luminescens subsp. laumondii).